Reading from the N-terminus, the 197-residue chain is Isopentenyl-diphosphate Delta-isomerase (197 aa).

Mn(2+) contacts are provided by H41 and H48. The 138-residue stretch at 46-183 folds into the Nudix hydrolase domain; it reads QLHRAFSVFL…AWFMTVLDAA (138 aa). C83 is a catalytic residue. Mn(2+) is bound at residue H85. Mg(2+) is bound at residue E103. Positions 130 and 132 each coordinate Mn(2+). Residue E132 is part of the active site.

Belongs to the IPP isomerase type 1 family. The cofactor is Mg(2+). Mn(2+) is required as a cofactor.

It localises to the cytoplasm. The enzyme catalyses isopentenyl diphosphate = dimethylallyl diphosphate. The protein operates within isoprenoid biosynthesis; dimethylallyl diphosphate biosynthesis; dimethylallyl diphosphate from isopentenyl diphosphate: step 1/1. Catalyzes the 1,3-allylic rearrangement of the homoallylic substrate isopentenyl (IPP) to its highly electrophilic allylic isomer, dimethylallyl diphosphate (DMAPP). The chain is Isopentenyl-diphosphate Delta-isomerase from Streptomyces griseus subsp. griseus (strain JCM 4626 / CBS 651.72 / NBRC 13350 / KCC S-0626 / ISP 5235).